Consider the following 321-residue polypeptide: Ubiquitin-conjugating enzyme E2 U (321 aa).

The region spanning 4–153 (RAYLLLHRDF…LRLFNRPLQM (150 aa)) is the UBC core domain. The Glycyl thioester intermediate role is filled by Cys89. The interval 285–321 (WKSDTSLYENDTDEPREEEVEDLISWTNTLNTNTSED) is disordered. Residues 294–306 (NDTDEPREEEVED) show a composition bias toward acidic residues. Over residues 309 to 321 (SWTNTLNTNTSED) the composition is skewed to polar residues.

The protein belongs to the ubiquitin-conjugating enzyme family. In terms of processing, autoubiquitinated in vitro in the presence of UBR5.

It catalyses the reaction S-ubiquitinyl-[E1 ubiquitin-activating enzyme]-L-cysteine + [E2 ubiquitin-conjugating enzyme]-L-cysteine = [E1 ubiquitin-activating enzyme]-L-cysteine + S-ubiquitinyl-[E2 ubiquitin-conjugating enzyme]-L-cysteine.. The protein operates within protein modification; protein ubiquitination. Its function is as follows. Catalyzes the covalent attachment of ubiquitin to other proteins. This is Ubiquitin-conjugating enzyme E2 U (UBE2U) from Homo sapiens (Human).